We begin with the raw amino-acid sequence, 424 residues long: Dapdiamide A synthase (424 aa).

Positions 120 to 318 (QEQLALKGVA…QISKLAQAVL (199 aa)) constitute an ATP-grasp domain. Residue 147–209 (AGHAHWPVVL…QEFLAGEEFV (63 aa)) participates in ATP binding. Mg(2+) contacts are provided by E275 and E287.

Mg(2+) serves as cofactor. Mn(2+) is required as a cofactor.

The enzyme catalyses 3-[[[(2R,3R)-3-carboxyoxiran-2-yl]carbonyl]amino]-L-alanine + L-valine + ATP = dapdiamide E + ADP + phosphate + H(+). It carries out the reaction N(3)-fumaramoyl-(S)-2,3-diaminopropanoate + L-valine + ATP = dapdiamide A + ADP + phosphate + H(+). The catalysed reaction is N(3)-fumaramoyl-(S)-2,3-diaminopropanoate + L-isoleucine + ATP = dapdiamide B + ADP + phosphate + H(+). It catalyses the reaction N(3)-fumaramoyl-(S)-2,3-diaminopropanoate + L-leucine + ATP = dapdiamide C + ADP + phosphate + H(+). It participates in antibiotic biosynthesis. Functionally, involved in dapdiamide antibiotics biosynthesis. Ligates N-beta-fumaramoyl-DAP and valine, isoleucine or leucine to form dapdiamides A, B or C, respectively. Also ligates N-beta-epoxysuccinamoyl-DAP and valine to form dapdiamide E. The polypeptide is Dapdiamide A synthase (Enterobacter agglomerans (Erwinia herbicola)).